The chain runs to 368 residues: 3-dehydroquinate synthase (368 aa).

NAD(+)-binding positions include 69–74, 103–107, 127–128, lysine 140, and lysine 149; these read DGEAYK, GVIGD, and TT. Zn(2+)-binding residues include glutamate 182, histidine 245, and histidine 262.

Belongs to the sugar phosphate cyclases superfamily. Dehydroquinate synthase family. It depends on NAD(+) as a cofactor. Co(2+) is required as a cofactor. Requires Zn(2+) as cofactor.

The protein resides in the cytoplasm. The catalysed reaction is 7-phospho-2-dehydro-3-deoxy-D-arabino-heptonate = 3-dehydroquinate + phosphate. It functions in the pathway metabolic intermediate biosynthesis; chorismate biosynthesis; chorismate from D-erythrose 4-phosphate and phosphoenolpyruvate: step 2/7. Catalyzes the conversion of 3-deoxy-D-arabino-heptulosonate 7-phosphate (DAHP) to dehydroquinate (DHQ). The chain is 3-dehydroquinate synthase from Pseudomonas aeruginosa (strain ATCC 15692 / DSM 22644 / CIP 104116 / JCM 14847 / LMG 12228 / 1C / PRS 101 / PAO1).